A 714-amino-acid polypeptide reads, in one-letter code: RanBP-type and C3HC4-type zinc finger-containing protein 1 (714 aa).

2 disordered regions span residues 1 to 23 and 152 to 172; these read MSLS…SHLG and SSST…SKAP. The segment covering 14 to 23 has biased composition (polar residues); sequence PAQSSSSHLG. A Ubiquitin-like domain is found at 225 to 301; the sequence is LAVVVEDASS…TAFLYLISAR (77 aa). The RanBP2-type zinc-finger motif lies at 394–426; sequence RTSIQPGWACPTCTYINKPTRPGCEMCSADRPE. The TRIAD supradomain stretch occupies residues 482–710; that stretch reads ERVECRICYV…VNKQRCHPKC (229 aa). Zn(2+) contacts are provided by Cys-486, Cys-489, Cys-504, His-506, Cys-509, Cys-512, Cys-527, Cys-536, Cys-575, Cys-580, Cys-595, Cys-598, Cys-603, Cys-606, His-610, Cys-615, Cys-651, and Cys-654. The RING-type 1 zinc finger occupies 486 to 536; sequence CRICYVELESGEGVLLRECLHCFCKECLRSVILMSEDPQVACPYRDESYAC. The IBR-type zinc finger occupies 555 to 615; sequence QHWLQRGLSV…CKAIHEGMNC (61 aa). An RING-type 2; atypical zinc finger spans residues 651–680; sequence CPQCGIIVQKKEGCDWLRCTVCHTEICWVT. Cys-664 is a catalytic residue. 2 residues coordinate Zn(2+): Cys-669 and Cys-672.

The protein belongs to the RBR family. As to quaternary structure, component of the LUBAC complex (linear ubiquitin chain assembly complex).

The catalysed reaction is [E2 ubiquitin-conjugating enzyme]-S-ubiquitinyl-L-cysteine + [acceptor protein]-L-lysine = [E2 ubiquitin-conjugating enzyme]-L-cysteine + [acceptor protein]-N(6)-ubiquitinyl-L-lysine.. Its pathway is protein modification; protein ubiquitination. Functionally, component of the LUBAC complex which conjugates linear ('Met-1'-linked) polyubiquitin chains to substrates and plays a key role in NF-kappa-B activation and regulation of inflammation. LUBAC conjugates linear polyubiquitin to ikbkg and RIPK1 and is involved in activation of the canonical NF-kappa-B and the JNK signaling pathways. Linear ubiquitination mediated by the LUBAC complex interferes with TNF-induced cell death and thereby prevents inflammation. LUBAC is recruited to the TNF-R1 signaling complex (TNF-RSC) to conjugate linear polyubiquitin to ikbkg and possibly other components contributing to the stability of the complex. The LUBAC complex is also involved in innate immunity by conjugating linear polyubiquitin chains at the surface of bacteria invading the cytosol to form the ubiquitin coat surrounding bacteria. LUBAC is not able to initiate formation of the bacterial ubiquitin coat, and can only promote formation of linear polyubiquitins on pre-existing ubiquitin. The bacterial ubiquitin coat acts as an 'eat-me' signal for xenophagy and promotes NF-kappa-B activation. Binds polyubiquitin of different linkage types. This Danio rerio (Zebrafish) protein is RanBP-type and C3HC4-type zinc finger-containing protein 1 (rbck1).